Reading from the N-terminus, the 557-residue chain is Dihydroxy-acid dehydratase (557 aa).

Cysteine 50 lines the [2Fe-2S] cluster pocket. Aspartate 82 is a binding site for Mg(2+). Position 123 (cysteine 123) interacts with [2Fe-2S] cluster. Mg(2+) contacts are provided by aspartate 124 and lysine 125. At lysine 125 the chain carries N6-carboxylysine. Cysteine 195 contacts [2Fe-2S] cluster. Residue glutamate 447 coordinates Mg(2+). Serine 473 (proton acceptor) is an active-site residue.

The protein belongs to the IlvD/Edd family. As to quaternary structure, homodimer. The cofactor is [2Fe-2S] cluster. Mg(2+) serves as cofactor.

The catalysed reaction is (2R)-2,3-dihydroxy-3-methylbutanoate = 3-methyl-2-oxobutanoate + H2O. It catalyses the reaction (2R,3R)-2,3-dihydroxy-3-methylpentanoate = (S)-3-methyl-2-oxopentanoate + H2O. It functions in the pathway amino-acid biosynthesis; L-isoleucine biosynthesis; L-isoleucine from 2-oxobutanoate: step 3/4. Its pathway is amino-acid biosynthesis; L-valine biosynthesis; L-valine from pyruvate: step 3/4. Functionally, functions in the biosynthesis of branched-chain amino acids. Catalyzes the dehydration of (2R,3R)-2,3-dihydroxy-3-methylpentanoate (2,3-dihydroxy-3-methylvalerate) into 2-oxo-3-methylpentanoate (2-oxo-3-methylvalerate) and of (2R)-2,3-dihydroxy-3-methylbutanoate (2,3-dihydroxyisovalerate) into 2-oxo-3-methylbutanoate (2-oxoisovalerate), the penultimate precursor to L-isoleucine and L-valine, respectively. The sequence is that of Dihydroxy-acid dehydratase from Nitrosospira multiformis (strain ATCC 25196 / NCIMB 11849 / C 71).